Consider the following 233-residue polypeptide: uncharacterized protein (233 aa).

Residues methionine 1–leucine 10 are compositionally biased toward basic residues. The interval methionine 1–arginine 90 is disordered. Positions lysine 11–glutamate 56 are enriched in basic and acidic residues. The segment covering lysine 76 to glycine 85 has biased composition (basic residues). The RRM domain occupies valine 92–glycine 171. Composition is skewed to basic and acidic residues over residues methionine 194–alanine 216 and isoleucine 224–glutamine 233. The tract at residues methionine 194 to glutamine 233 is disordered.

It is found in the nucleus. It localises to the nucleolus. This is an uncharacterized protein from Schizosaccharomyces pombe (strain 972 / ATCC 24843) (Fission yeast).